A 107-amino-acid chain; its full sequence is Phosphoribosyl-ATP pyrophosphatase (107 aa).

This sequence belongs to the PRA-PH family.

The protein resides in the cytoplasm. It carries out the reaction 1-(5-phospho-beta-D-ribosyl)-ATP + H2O = 1-(5-phospho-beta-D-ribosyl)-5'-AMP + diphosphate + H(+). Its pathway is amino-acid biosynthesis; L-histidine biosynthesis; L-histidine from 5-phospho-alpha-D-ribose 1-diphosphate: step 2/9. The protein is Phosphoribosyl-ATP pyrophosphatase of Nitrobacter hamburgensis (strain DSM 10229 / NCIMB 13809 / X14).